A 228-amino-acid chain; its full sequence is Response regulator MprA (228 aa).

The Response regulatory domain occupies 2–116 (RILAVDDDRA…ELLARIRALL (115 aa)). Aspartate 46 carries the 4-aspartylphosphate modification. Positions 127 to 225 (SVAMSFSDLT…VRGVGYVLRE (99 aa)) form a DNA-binding region, ompR/PhoB-type.

Post-translationally, phosphorylated and dephosphorylated by MprB.

The protein localises to the cytoplasm. Member of the two-component regulatory system MprB/MprA which contributes to maintaining a balance among several systems involved in stress resistance and is required for establishment and maintenance of persistent infection in the host. Functions as a transcriptional regulator that recognizes a 19-bp nucleotide motif comprizing two loosely conserved 8-bp direct DNA-binding motif repeats separated by a 3-bp spacer region. This is Response regulator MprA (mprA) from Mycobacterium leprae (strain TN).